The chain runs to 474 residues: MVSGCCRLDMSSYVSVLVLCSLLLWGSNSQQEQSSAAQRCFCQVTGYLDDCTCDVETIDHFNNYGLFPKLQQLVASDYFRYYKANLKKPCPFWEDNSHCGVKDCAVKPCPTDEVPGLKPPGFKYTEEANRAHEEIDDCEKEKRLSAVDESLSVEAQEAMLKWNRHDDSADNFCELDDEESPDAEYVDLLKNPERYTGYKGADTWRIWNSIYEENCFKPKAVQRPLNPLTSTRGENEGKVFYNWLDGLCVEKRAFYRLISGLHASINIHLCANYLLKDTWMDKIWGHNTAEFQKRFDATLTQGEGPKRLKNLYFIYLIELRAISKVLPFFERSSFLLYTGNETKDTETKKLLLDVLLDARDFPLHFDENSLFSGDKKEAAKLKEDFRQHFRNISKIMDCVGCFKCRLWGKLQTQGLGTALKILFSERQIENLSESNQPSEFHLTRQEIVALFNAFARISTSVKELENFRTLLEKV.

A signal peptide spans 1–29; that stretch reads MVSGCCRLDMSSYVSVLVLCSLLLWGSNS. 8 disulfides stabilise this stretch: Cys-40/Cys-53, Cys-42/Cys-51, Cys-90/Cys-398, Cys-99/Cys-104, Cys-99/Cys-138, Cys-104/Cys-109, Cys-215/Cys-248, and Cys-401/Cys-404. FAD contacts are provided by Arg-194, Thr-196, and Trp-207. 4 residues coordinate FAD: Ser-259, His-262, Arg-294, and Arg-307. N-linked (GlcNAc...) asparagine glycans are attached at residues Asn-340 and Asn-391. Asn-430 carries N-linked (GlcNAc...) asparagine glycosylation.

This sequence belongs to the EROs family. In terms of assembly, predominantly monomer. May function both as a monomer and a homodimer. Requires FAD as cofactor. In terms of processing, the Cys-99/Cys-104 and Cys-401/Cys-404 disulfide bonds constitute the redox-active center. The Cys-99/Cys-104 disulfide bond may accept electron from protein disulfide isomerase (PDI) and funnel them to the active site disulfide Cys-401/Cys-404.

The protein localises to the endoplasmic reticulum membrane. Its activity is regulated as follows. Enzyme activity is tightly regulated to prevent the accumulation of reactive oxygen species in the endoplasmic reticulum. Reversibly down-regulated by the formation of disulfide bonds between the active site Cys-99 and Cys-138, and between Cys-104 and Cys-109. Glutathione may be required to regulate its activity in the endoplasmic reticulum. Its function is as follows. Oxidoreductase involved in disulfide bond formation in the endoplasmic reticulum. Efficiently reoxidizes P4HB/PDI, the enzyme catalyzing protein disulfide formation, in order to allow P4HB to sustain additional rounds of disulfide formation. Following P4HB reoxidation, passes its electrons to molecular oxygen via FAD, leading to the production of reactive oxygen species (ROS) in the cell. Required for the folding of immunoglobulins. This is ERO1-like protein alpha from Xenopus tropicalis (Western clawed frog).